Consider the following 69-residue polypeptide: Cold shock-like protein CspC (69 aa).

One can recognise a CSD domain in the interval 6 to 66; the sequence is GQVKWFNESK…GQKGPAAVNV (61 aa).

It localises to the cytoplasm. The chain is Cold shock-like protein CspC (cspC) from Escherichia coli O157:H7.